Here is a 594-residue protein sequence, read N- to C-terminus: MHEHLKEKLAILPDQPGCYLMKDKQGTVIYVGKAKVLKNRVRSYFTGSHDGKTLRLVGEIVDFEYIVTSSNLEALILELNLIKKYDPKYNIQLKDDKTYPFIKITAEKQPRLLITRNVKKDKGKYFGPYPNAQSAHETKKLLDRMYPLRKCTNMPDKVCLYYHMDQCLAPCVKEVTEEQNKEIVDEIIKFLNGGHKEVRSELEIKMYEASEKLEFERAKELRDQIAHIDAIMEKQKMIMSDLVDRDVFGYAVDKGWMCVQVFFVRKGKLIERDVSMFPIYDEPEEGFLTFIGQFYENSSHFKPKEIVVPGSIDSELVERFLEVEATQPKRGKKKDLVELANKNAKIALEEKFYLIERDEERTIKAVDHLGKQLGIETPYRIEAFDNSNIQGTNPVSAMIAFIDGKPAKKEYRKYKIKTVQGPDDYESMREVVRRRYTRALKENLPLPDLIIIDGGKGHLAAASDILEDELGLYIPMAGLVKDDKHKTSHLIIGDPPEPVVLERNSQEFYLLQRIQDEVHRFAITFHRQLHGKSVIQSALDDIPGIGDKRKKVLLKHFGSLKKMKEASVAEFVEAGMPKNVAETIYTYLTDKKTL.

The GIY-YIG domain maps to 14-91; the sequence is DQPGCYLMKD…IKKYDPKYNI (78 aa). Residues 196–231 form the UVR domain; that stretch reads KEVRSELEIKMYEASEKLEFERAKELRDQIAHIDAI.

Belongs to the UvrC family. Interacts with UvrB in an incision complex.

It is found in the cytoplasm. Its function is as follows. The UvrABC repair system catalyzes the recognition and processing of DNA lesions. UvrC both incises the 5' and 3' sides of the lesion. The N-terminal half is responsible for the 3' incision and the C-terminal half is responsible for the 5' incision. This Bacillus cereus (strain G9842) protein is UvrABC system protein C.